We begin with the raw amino-acid sequence, 500 residues long: NAD(P)H-quinone oxidoreductase chain 4, chloroplastic (500 aa).

A run of 14 helical transmembrane segments spans residues 4–24 (FPWL…LFFL), 31–51 (LIKW…TYAF), 87–107 (IGPI…AWPV), 113–130 (LFHF…GSFS), 134–154 (LLLF…LLSM), 167–187 (FILY…GLGL), 208–228 (ALEI…SPII), 242–262 (HYST…YGLV), 272–292 (AHSI…IYAA), 305–325 (IAYS…SITD), 330–350 (GAIL…FLAG), 386–406 (LALP…GIIT), 416–436 (ILIT…SLSM), and 462–482 (LFVS…PDFV).

The protein belongs to the complex I subunit 4 family.

It is found in the plastid. Its subcellular location is the chloroplast thylakoid membrane. It carries out the reaction a plastoquinone + NADH + (n+1) H(+)(in) = a plastoquinol + NAD(+) + n H(+)(out). The enzyme catalyses a plastoquinone + NADPH + (n+1) H(+)(in) = a plastoquinol + NADP(+) + n H(+)(out). The polypeptide is NAD(P)H-quinone oxidoreductase chain 4, chloroplastic (Gossypium barbadense (Sea Island cotton)).